The following is a 150-amino-acid chain: UPF0756 membrane protein APL_0366 (150 aa).

Transmembrane regions (helical) follow at residues 12–34, 52–72, 82–102, and 123–143; these read LVVL…ATVL, HGLS…IVSG, FLNW…WLGG, and IIGV…AGIL.

It belongs to the UPF0756 family.

The protein localises to the cell membrane. The polypeptide is UPF0756 membrane protein APL_0366 (Actinobacillus pleuropneumoniae serotype 5b (strain L20)).